Here is a 316-residue protein sequence, read N- to C-terminus: UDP-N-acetylenolpyruvoylglucosamine reductase (316 aa).

An FAD-binding PCMH-type domain is found at 27-225 (VGGKAERFYR…KTAINALLKK (199 aa)). Arginine 190 is an active-site residue. Residue serine 239 is the Proton donor of the active site. The active site involves glutamate 309.

The protein belongs to the MurB family. Requires FAD as cofactor.

The protein localises to the cytoplasm. It carries out the reaction UDP-N-acetyl-alpha-D-muramate + NADP(+) = UDP-N-acetyl-3-O-(1-carboxyvinyl)-alpha-D-glucosamine + NADPH + H(+). It participates in cell wall biogenesis; peptidoglycan biosynthesis. Cell wall formation. This Coxiella burnetii (strain Dugway 5J108-111) protein is UDP-N-acetylenolpyruvoylglucosamine reductase.